An 831-amino-acid polypeptide reads, in one-letter code: Valine--tRNA ligase (831 aa).

The short motif at 77–87 is the 'HIGH' region element; it reads PFTSGELHMGH. Residues 564-568 carry the 'KMSKS' region motif; it reads RMSKS. Lys567 lines the ATP pocket.

The protein belongs to the class-I aminoacyl-tRNA synthetase family. ValS type 2 subfamily.

It localises to the cytoplasm. The catalysed reaction is tRNA(Val) + L-valine + ATP = L-valyl-tRNA(Val) + AMP + diphosphate. In terms of biological role, catalyzes the attachment of valine to tRNA(Val). As ValRS can inadvertently accommodate and process structurally similar amino acids such as threonine, to avoid such errors, it has a 'posttransfer' editing activity that hydrolyzes mischarged Thr-tRNA(Val) in a tRNA-dependent manner. This is Valine--tRNA ligase from Sulfolobus acidocaldarius (strain ATCC 33909 / DSM 639 / JCM 8929 / NBRC 15157 / NCIMB 11770).